The chain runs to 368 residues: 1-aminocyclopropane-1-carboxylate oxidase (368 aa).

A Fe2OG dioxygenase domain is found at 177–307; it reads PFILMGLLHY…RFSIPFFLDP (131 aa). The disordered stretch occupies residues 191–226; it reads HQEQEEEQEDDESNNGGKKSPNPDESKKPEVEKFGT. Acidic residues predominate over residues 194 to 203; sequence QEEEQEDDES. Over residues 211–223 the composition is skewed to basic and acidic residues; that stretch reads PNPDESKKPEVEK. His229, Asp231, and His287 together coordinate Fe cation. Arg298 is a 2-oxoglutarate binding site.

It belongs to the iron/ascorbate-dependent oxidoreductase family. The cofactor is Fe(2+).

The enzyme catalyses 1-aminocyclopropane-1-carboxylate + L-ascorbate + O2 = ethene + L-dehydroascorbate + hydrogen cyanide + CO2 + 2 H2O. It participates in alkene biosynthesis; ethylene biosynthesis via S-adenosyl-L-methionine; ethylene from S-adenosyl-L-methionine: step 2/2. Involved in ethylene biosynthesis. Overexpression induces overproduction of ethylene. The chain is 1-aminocyclopropane-1-carboxylate oxidase (aco) from Dictyostelium discoideum (Social amoeba).